The chain runs to 308 residues: uncharacterized protein (308 aa).

The next 10 helical transmembrane spans lie at 6–26 (VVLI…FGIL), 31–51 (AKIL…FLTI), 63–83 (FLKL…LAYL), 100–120 (ILVS…LGMF), 128–148 (AIFC…YVGI), 162–182 (MAKF…FFGF), 195–215 (LNYL…LSLS), 221–241 (FGVF…PATA), 257–277 (VLLV…GTLY), and 287–307 (SIFI…WILL).

It belongs to the auxin efflux carrier (TC 2.A.69) family.

Its subcellular location is the cell membrane. This is an uncharacterized protein from Methanocaldococcus jannaschii (strain ATCC 43067 / DSM 2661 / JAL-1 / JCM 10045 / NBRC 100440) (Methanococcus jannaschii).